Reading from the N-terminus, the 430-residue chain is UDP-N-acetylglucosamine 1-carboxyvinyltransferase (430 aa).

22–23 (KN) contacts phosphoenolpyruvate. Arginine 102 contacts UDP-N-acetyl-alpha-D-glucosamine. Catalysis depends on cysteine 126, which acts as the Proton donor. Cysteine 126 is modified (2-(S-cysteinyl)pyruvic acid O-phosphothioketal). UDP-N-acetyl-alpha-D-glucosamine is bound by residues 131-135 (RPVDL), 172-175 (KVSV), aspartate 317, and isoleucine 339.

It belongs to the EPSP synthase family. MurA subfamily.

It localises to the cytoplasm. The catalysed reaction is phosphoenolpyruvate + UDP-N-acetyl-alpha-D-glucosamine = UDP-N-acetyl-3-O-(1-carboxyvinyl)-alpha-D-glucosamine + phosphate. It functions in the pathway cell wall biogenesis; peptidoglycan biosynthesis. Cell wall formation. Adds enolpyruvyl to UDP-N-acetylglucosamine. The sequence is that of UDP-N-acetylglucosamine 1-carboxyvinyltransferase from Sinorhizobium medicae (strain WSM419) (Ensifer medicae).